Reading from the N-terminus, the 271-residue chain is 2,3,4,5-tetrahydropyridine-2,6-dicarboxylate N-succinyltransferase (271 aa).

The substrate site is built by arginine 102 and aspartate 139.

It belongs to the transferase hexapeptide repeat family. As to quaternary structure, homotrimer.

It is found in the cytoplasm. The enzyme catalyses (S)-2,3,4,5-tetrahydrodipicolinate + succinyl-CoA + H2O = (S)-2-succinylamino-6-oxoheptanedioate + CoA. It functions in the pathway amino-acid biosynthesis; L-lysine biosynthesis via DAP pathway; LL-2,6-diaminopimelate from (S)-tetrahydrodipicolinate (succinylase route): step 1/3. In Coxiella burnetii (strain RSA 331 / Henzerling II), this protein is 2,3,4,5-tetrahydropyridine-2,6-dicarboxylate N-succinyltransferase.